Here is a 346-residue protein sequence, read N- to C-terminus: NADH-quinone oxidoreductase subunit H (346 aa).

Transmembrane regions (helical) follow at residues 6-26 (ILFW…ACAY), 76-96 (IMYL…WSVV), 128-148 (ILFL…AGWA), 166-186 (ISYE…TGSL), 198-218 (LWNI…VAMF), 260-280 (ITMS…PFGI), 289-309 (LFGL…FVWV), and 324-344 (LGWK…SLYI).

Belongs to the complex I subunit 1 family. NDH-1 is composed of 14 different subunits. Subunits NuoA, H, J, K, L, M, N constitute the membrane sector of the complex.

Its subcellular location is the cell inner membrane. The enzyme catalyses a quinone + NADH + 5 H(+)(in) = a quinol + NAD(+) + 4 H(+)(out). NDH-1 shuttles electrons from NADH, via FMN and iron-sulfur (Fe-S) centers, to quinones in the respiratory chain. The immediate electron acceptor for the enzyme in this species is believed to be ubiquinone. Couples the redox reaction to proton translocation (for every two electrons transferred, four hydrogen ions are translocated across the cytoplasmic membrane), and thus conserves the redox energy in a proton gradient. This subunit may bind ubiquinone. This chain is NADH-quinone oxidoreductase subunit H, found in Leptospira borgpetersenii serovar Hardjo-bovis (strain JB197).